The following is a 903-amino-acid chain: Protein translocase subunit SecA (903 aa).

ATP-binding positions include Gln-87, 105 to 109, and Asp-512; that span reads GEGKT. 4 residues coordinate Zn(2+): Cys-887, Cys-889, Cys-898, and His-899.

It belongs to the SecA family. Monomer and homodimer. Part of the essential Sec protein translocation apparatus which comprises SecA, SecYEG and auxiliary proteins SecDF-YajC and YidC. Requires Zn(2+) as cofactor.

It is found in the cell inner membrane. The protein resides in the cytoplasm. The enzyme catalyses ATP + H2O + cellular proteinSide 1 = ADP + phosphate + cellular proteinSide 2.. Part of the Sec protein translocase complex. Interacts with the SecYEG preprotein conducting channel. Has a central role in coupling the hydrolysis of ATP to the transfer of proteins into and across the cell membrane, serving both as a receptor for the preprotein-SecB complex and as an ATP-driven molecular motor driving the stepwise translocation of polypeptide chains across the membrane. This is Protein translocase subunit SecA from Photorhabdus laumondii subsp. laumondii (strain DSM 15139 / CIP 105565 / TT01) (Photorhabdus luminescens subsp. laumondii).